A 116-amino-acid chain; its full sequence is Protein Wnt-5b (116 aa).

Ser-1 is lipidated: O-palmitoleoyl serine; by PORCN. Residues Asn-69 and Asn-83 are each glycosylated (N-linked (GlcNAc...) asparagine). A disulfide bond links Cys-82 and Cys-97.

This sequence belongs to the Wnt family. Palmitoleoylation is required for efficient binding to frizzled receptors. Depalmitoleoylation leads to Wnt signaling pathway inhibition.

Its subcellular location is the secreted. It localises to the extracellular space. It is found in the extracellular matrix. In terms of biological role, ligand for members of the frizzled family of seven transmembrane receptors. Probable developmental protein. May be a signaling molecule which affects the development of discrete regions of tissues. Is likely to signal over only few cell diameters. This Plethodon jordani (Red-cheeked salamander) protein is Protein Wnt-5b (WNT-5B).